Reading from the N-terminus, the 330-residue chain is Acrylyl-CoA reductase AcuI (330 aa).

Residues Tyr-44, 159 to 162, 181 to 183, Arg-201, Leu-247, and Ser-272 each bind NADP(+); these read AGGV and TGR.

Belongs to the zinc-containing alcohol dehydrogenase family. Acrylyl-CoA reductase subfamily. Homodimer.

The protein localises to the cytoplasm. It catalyses the reaction propanoyl-CoA + NADP(+) = acryloyl-CoA + NADPH + H(+). Its function is as follows. Probably catalyzes the NADPH-dependent reduction of acrylyl-CoA to propanoyl-CoA. Restores acrylate resistance when expressed in an E.coli strain K12 acuI deletion. The protein is Acrylyl-CoA reductase AcuI (acuI) of Ruegeria pomeroyi (strain ATCC 700808 / DSM 15171 / DSS-3) (Silicibacter pomeroyi).